A 184-amino-acid polypeptide reads, in one-letter code: Shikimate kinase (184 aa).

17–22 serves as a coordination point for ATP; that stretch reads GAGKTT. Thr-21 provides a ligand contact to Mg(2+). The substrate site is built by Asp-39, Arg-63, and Gly-85. Position 123 (Arg-123) interacts with ATP. Arg-142 is a substrate binding site.

The protein belongs to the shikimate kinase family. In terms of assembly, monomer. Mg(2+) is required as a cofactor.

Its subcellular location is the cytoplasm. It carries out the reaction shikimate + ATP = 3-phosphoshikimate + ADP + H(+). The protein operates within metabolic intermediate biosynthesis; chorismate biosynthesis; chorismate from D-erythrose 4-phosphate and phosphoenolpyruvate: step 5/7. Its function is as follows. Catalyzes the specific phosphorylation of the 3-hydroxyl group of shikimic acid using ATP as a cosubstrate. The chain is Shikimate kinase from Burkholderia pseudomallei (strain 1710b).